The primary structure comprises 297 residues: GTP cyclohydrolase FolE2 (297 aa).

Disordered stretches follow at residues Met-1–Asp-21 and Ile-180–Pro-207.

The protein belongs to the GTP cyclohydrolase IV family.

The enzyme catalyses GTP + H2O = 7,8-dihydroneopterin 3'-triphosphate + formate + H(+). It functions in the pathway cofactor biosynthesis; 7,8-dihydroneopterin triphosphate biosynthesis; 7,8-dihydroneopterin triphosphate from GTP: step 1/1. In terms of biological role, converts GTP to 7,8-dihydroneopterin triphosphate. This chain is GTP cyclohydrolase FolE2, found in Methylibium petroleiphilum (strain ATCC BAA-1232 / LMG 22953 / PM1).